The chain runs to 102 residues: Large ribosomal subunit protein uL24 (102 aa).

The interval 1 to 22 (MHVKKGDTVQVMSGKDKGKQGV) is disordered.

The protein belongs to the universal ribosomal protein uL24 family. As to quaternary structure, part of the 50S ribosomal subunit.

Its function is as follows. One of two assembly initiator proteins, it binds directly to the 5'-end of the 23S rRNA, where it nucleates assembly of the 50S subunit. One of the proteins that surrounds the polypeptide exit tunnel on the outside of the subunit. The polypeptide is Large ribosomal subunit protein uL24 (Exiguobacterium sp. (strain ATCC BAA-1283 / AT1b)).